Consider the following 1669-residue polypeptide: Collagen alpha-1(IV) chain (1669 aa).

A signal peptide spans 1–27 (MGPRLSVWLLLLPAALLLHEEHSRAAA). A propeptide spans 28–172 (KGGCAGSGCG…LGHVPGMLLK (145 aa)) (N-terminal propeptide (7S domain)). Disordered stretches follow at residues 48 to 459 (KGER…EIGE), 504 to 1382 (GRDG…PKGQ), and 1404 to 1431 (PGQK…DGLP). The N-linked (GlcNAc...) asparagine glycan is linked to N126. The segment at 173–1440 (GERGFPGIPG…PGSMGPPGTP (1268 aa)) is triple-helical region. The span at 196-214 (VGPPGFTGPPGPPGPPGPP) shows a compositional bias: pro residues. 3-hydroxyproline is present on residues P204, P207, and P210. Positions 234–249 (QGVSGPPGVPGQAQVQ) are enriched in low complexity. Composition is skewed to basic and acidic residues over residues 250-263 (EKGD…KGQK) and 289-298 (PGKDGDKGEK). 3 stretches are compositionally biased toward pro residues: residues 367–376 (PGQPGPPGLP), 413–424 (PGPPGSPGPPGQ), and 436–448 (PGPP…PGIP). The span at 535-545 (FDLRLKGDKGD) shows a compositional bias: basic and acidic residues. The segment covering 586 to 595 (GPPGGVGFPG) has biased composition (gly residues). 3-hydroxyproline is present on residues P587 and P602. P603 is modified (4-hydroxyproline). P605 carries the post-translational modification 3-hydroxyproline. Residue P606 is modified to 4-hydroxyproline. Over residues 611-620 (AGPIGDKGQA) the composition is skewed to low complexity. Residues 621–630 (GFPGGPGSPG) are compositionally biased toward gly residues. 4-hydroxyproline is present on residues P623, P626, P629, and P632. P647 is subject to 3-hydroxyproline. The segment covering 797 to 817 (GVPGIGPPGARGPPGGQGPPG) has biased composition (gly residues). 2 stretches are compositionally biased toward low complexity: residues 856 to 875 (QSGL…PGFP) and 977 to 986 (PGKDGQAGQP). Gly residues predominate over residues 1011-1020 (GSVGGMGLPG). A compositionally biased stretch (low complexity) spans 1086–1114 (SIGIPGMPGSPGLKGSPGSVGYPGSPGLP). Position 1214 is a 3-hydroxyproline (P1214). The span at 1247-1258 (PGLPGPMGPPGL) shows a compositional bias: pro residues. The segment covering 1290–1299 (GMPGIGGSPG) has biased composition (gly residues). The span at 1368–1382 (PGLKGLQGLPGPKGQ) shows a compositional bias: low complexity. The residue at position 1424 (P1424) is a 3-hydroxyproline. The Collagen IV NC1 domain occupies 1445–1669 (GFLVTRHSQT…SRCQVCMRRT (225 aa)). Cystine bridges form between C1460–C1551, C1493–C1548, C1505–C1511, C1570–C1665, C1604–C1662, and C1616–C1622. An S-Lysyl-methionine sulfilimine (Met-Lys) (interchain with K-1651) cross-link involves residue M1533. K1651 participates in a covalent cross-link: S-Lysyl-methionine sulfilimine (Lys-Met) (interchain with M-1533).

It belongs to the type IV collagen family. As to quaternary structure, there are six type IV collagen isoforms, alpha 1(IV)-alpha 6(IV), each of which can form a triple helix structure with 2 other chains to generate type IV collagen network. Interacts with EFEMP2. In terms of processing, lysines at the third position of the tripeptide repeating unit (G-X-Y) are hydroxylated. The modified lysines can be O-glycosylated. Post-translationally, contains 4-hydroxyproline. Prolines at the third position of the tripeptide repeating unit (G-X-Y) are hydroxylated in some or all of the chains. Contains 3-hydroxyproline. This modification occurs on the first proline residue in the sequence motif Gly-Pro-Hyp, where Hyp is 4-hydroxyproline. In terms of processing, type IV collagens contain numerous cysteine residues which are involved in inter- and intramolecular disulfide bonding. 12 of these, located in the NC1 domain, are conserved in all known type IV collagens. Post-translationally, the trimeric structure of the NC1 domains is stabilized by covalent bonds (sulfilimine cross-links) between Lys and Met residues. These cross-links are important for the mechanical stability of the basement membrane. Sulfilimine cross-link is catalyzed by PXDN. Proteolytic processing produces the C-terminal NC1 peptide, arresten. Highly expressed in placenta.

It is found in the secreted. The protein localises to the extracellular space. It localises to the extracellular matrix. The protein resides in the basement membrane. Its function is as follows. Type IV collagen is the major structural component of glomerular basement membranes (GBM), forming a 'chicken-wire' meshwork together with laminins, proteoglycans and entactin/nidogen. Functionally, arresten, comprising the C-terminal NC1 domain, inhibits angiogenesis and tumor formation. The C-terminal half is found to possess the anti-angiogenic activity. Specifically inhibits endothelial cell proliferation, migration and tube formation. The protein is Collagen alpha-1(IV) chain of Homo sapiens (Human).